A 270-amino-acid chain; its full sequence is Regulatory protein RecX (270 aa).

Belongs to the RecX family.

The protein localises to the cytoplasm. Its function is as follows. Modulates RecA activity. The polypeptide is Regulatory protein RecX (Bacillus cereus (strain ZK / E33L)).